A 111-amino-acid chain; its full sequence is uncharacterized protein (111 aa).

The helical transmembrane segment at 64-86 (VLCWLVLPLYCCNLLNLFFNIFL) threads the bilayer.

The protein localises to the membrane. This is an uncharacterized protein from Saccharomyces cerevisiae (strain ATCC 204508 / S288c) (Baker's yeast).